Consider the following 353-residue polypeptide: Guanine nucleotide-binding protein alpha-1 subunit (353 aa).

Glycine 2 is lipidated: N-myristoyl glycine. A lipid anchor (S-palmitoyl cysteine) is attached at cysteine 3. The G-alpha domain maps to 32-353; sequence NEIKMLLLGA…QVNLRDCGLL (322 aa). A G1 motif region spans residues 35-48; the sequence is KMLLLGAGESGKST. Residues glutamate 43, serine 44, glycine 45, lysine 46, serine 47, threonine 48, aspartate 150, leucine 175, threonine 181, glycine 203, asparagine 269, lysine 270, aspartate 272, and alanine 325 each contribute to the GTP site. A Mg(2+)-binding site is contributed by serine 47. The tract at residues 173–181 is G2 motif; that stretch reads DVLRSRVKT. Threonine 181 lines the Mg(2+) pocket. The G3 motif stretch occupies residues 196-205; sequence YKLFDVGGQR. Positions 265 to 272 are G4 motif; sequence ILFLNKID. The tract at residues 323-328 is G5 motif; it reads TCATDT.

The protein belongs to the G-alpha family. G proteins are composed of 3 units; alpha, beta and gamma. The alpha chain contains the guanine nucleotide binding site. The cofactor is Mg(2+).

In terms of biological role, guanine nucleotide-binding proteins (G proteins) are involved as modulators or transducers in various transmembrane signaling systems. This Mycosarcoma maydis (Corn smut fungus) protein is Guanine nucleotide-binding protein alpha-1 subunit (GPA1).